A 319-amino-acid chain; its full sequence is Polyprenal reductase (319 aa).

Residues 1–12 (MQLVQLLPPGVS) are Cytoplasmic-facing. A helical transmembrane segment spans residues 13–33 (LLALVWLAVDAAFLTALLLYL). The Lumenal segment spans residues 34-79 (QRGCDSGRSLLCSVFQDLIRYGKTKSGLRRPSWLQWFDIPKRCFWH). A helical transmembrane segment spans residues 80 to 100 (FYFVSLVWNGFLLWILLHLLL). At 101 to 122 (QSVPVPEWLQAVLQFLCAGSEP) the chain is on the cytoplasmic side. Residues 123–143 (QVLGGELSVVLAFSLLWLHSL) traverse the membrane as a helical segment. At 144 to 158 (RRLLECLFVSIFSNG) the chain is on the lumenal side. A helical membrane pass occupies residues 159–179 (VIHFVQYCFGLGYYILIGFTI). Over 180-195 (LGYCPLDRRTAVSLDD) the chain is Cytoplasmic. A helical membrane pass occupies residues 196-216 (LLMQGNWYHILGLTLYVWASL). Residues 217–266 (HQYTCHCILADLRKSASGAIINLKHAVPTGDWFEKVSCPHYFAELLIYLS) lie on the Lumenal side of the membrane. Residues 267 to 287 (IAVVFGLLNTIWWLVVLYVLL) form a helical membrane-spanning segment. Residues 288-319 (SQALAAVLCHEFYHEKFDSYPIHRKAFIPLIF) lie on the Cytoplasmic side of the membrane.

The protein belongs to the steroid 5-alpha reductase family. Polyprenal reductase subfamily.

The protein localises to the endoplasmic reticulum membrane. It catalyses the reaction a di-trans,poly-cis-dolichal + NADP(+) = a di-trans,poly-cis-polyprenal + NADPH + H(+). It carries out the reaction a 3-oxo-5alpha-steroid + NADP(+) = a 3-oxo-Delta(4)-steroid + NADPH + H(+). The enzyme catalyses androst-4-ene-3,17-dione + NADPH + H(+) = 5alpha-androstan-3,17-dione + NADP(+). The catalysed reaction is 17beta-hydroxy-5alpha-androstan-3-one + NADP(+) = testosterone + NADPH + H(+). It functions in the pathway protein modification; protein glycosylation. Its function is as follows. Plays a key role in early steps of protein N-linked glycosylation by being involved in the conversion of polyprenol into dolichol. Acts as a polyprenal reductase that mediates the reduction of polyprenal into dolichal in a NADP-dependent mechanism. Dolichols are required for the synthesis of dolichol-linked monosaccharides and the oligosaccharide precursor used for N-glycosylation. Also able to convert testosterone (T) into 5-alpha-dihydrotestosterone (DHT). This chain is Polyprenal reductase (srd5a3), found in Xenopus laevis (African clawed frog).